We begin with the raw amino-acid sequence, 853 residues long: Lysine-specific histone demethylase 1A (853 aa).

Residues 1-177 (MLSGKKAAAA…EPEEPSGVEG (177 aa)) form a disordered region. Low complexity predominate over residues 7–26 (AAAAAAAAAAAAAAGTEAGS). Threonine 60 bears the Phosphothreonine mark. Over residues 76 to 97 (AEPPGSAGPQAGPTAGPGSATP) the composition is skewed to low complexity. Threonine 105 carries the phosphothreonine modification. Positions 111 to 152 (TSRRKRAKVEYREMDESLANLSEDEYYSEEERNAKAEKEKKL) form a coiled coil. Serine 127 and serine 132 each carry phosphoserine. Position 136 is a phosphotyrosine (tyrosine 136). Serine 138 bears the Phosphoserine mark. Positions 139 to 152 (EEERNAKAEKEKKL) are enriched in basic and acidic residues. The segment covering 161–173 (PEEENESEPEEPS) has biased composition (acidic residues). A Phosphoserine modification is found at serine 167. Residues 175–274 (VEGAAFQSRL…FGIYKRIKPL (100 aa)) form the SWIRM domain. FAD contacts are provided by residues serine 290, glutamate 309, arginine 311, arginine 317, and 333 to 334 (MV). The demethylase activity stretch occupies residues 301–853 (FGMDVTLLEA…GVPAQQSPSM (553 aa)). The stretch at 429–515 (IEHWKKIVKT…EEKLQELEAN (87 aa)) forms a coiled coil. Lysine 433, lysine 434, and lysine 437 each carry N6-acetyllysine. Glycyl lysine isopeptide (Lys-Gly) (interchain with G-Cter in SUMO2) cross-links involve residues lysine 443 and lysine 470. Lysine 504 is covalently cross-linked (Glycyl lysine isopeptide (Lys-Gly) (interchain with G-Cter in ubiquitin)). At serine 612 the chain carries Phosphoserine. FAD-binding positions include glutamate 802 and 811–812 (TV). Position 850 is a phosphoserine (serine 850).

Belongs to the flavin monoamine oxidase family. Component of a histone demethylase complex with RCOR1. Component of a BHC histone deacetylase complex that contains HDAC1, HDAC2, HMG20B, KDM1A, RCOR1 and PHF21A. The BHC complex may also contain ZMYM2, ZNF217, ZMYM3, GSE1 and GTF2I. In the complex, RCOR1 strongly enhances the demethylase activity and protects it from the proteasome while PHF21A inhibits the demethylase activity. Interacts with the androgen receptor (AR). Component of a RCOR/GFI/KDM1A/HDAC complex. Interacts directly with GFI1 and GFI1B. Interacts with SNAI1 (via SNAG domain). Interacts with INSM1. Interacts (via AOD/Tower domain) with JADE2 (via C-terminus). Interacts with ESRRB; co-occupes the core set of ESRRB targets. Interacts with SAMD1 (via WH domain); the interaction modulates KDM1A function. Interacts with RBPJ. Interacts with L3MBTL3. Interacts with ZMYND8. FAD serves as cofactor. In terms of processing, acetylated by KAT8 in epithelial but not in mesenchymal cells, thereby regulating the epithelial-to-mesenchymal transition. Acetylation by KAT8 reduces KDM1A association with nucleosomes, thereby decreasing histone H3 demethylation, leading to transcription activatio of target genes. Polyubiquitinated by JADE2; which leads to its proteasomal degradation. Deubiquitinated by USP38; preventing it from degradation by the 26S proteasome. As to expression, ubiquitously expressed.

The protein localises to the nucleus. It localises to the chromosome. It carries out the reaction N(6),N(6)-dimethyl-L-lysyl(4)-[histone H3] + 2 A + 2 H2O = L-lysyl(4)-[histone H3] + 2 formaldehyde + 2 AH2. Its activity is regulated as follows. The N-terminal sequences of INSM1 and SNAI1 compete with histone H3 for the same binding site and thereby inhibit histone demethylation (in vitro). In terms of biological role, histone demethylase that can demethylate both 'Lys-4' (H3K4me) and 'Lys-9' (H3K9me) of histone H3, thereby acting as a coactivator or a corepressor, depending on the context. Acts by oxidizing the substrate by FAD to generate the corresponding imine that is subsequently hydrolyzed. Acts as a corepressor by mediating demethylation of H3K4me, a specific tag for epigenetic transcriptional activation. Demethylates both mono- (H3K4me1) and di-methylated (H3K4me2) H3K4me. May play a role in the repression of neuronal genes. Alone, it is unable to demethylate H3K4me on nucleosomes and requires the presence of RCOR1/CoREST to achieve such activity. Also acts as a coactivator of androgen receptor (ANDR)-dependent transcription, by being recruited to ANDR target genes and mediating demethylation of H3K9me, a specific tag for epigenetic transcriptional repression. The presence of PRKCB in ANDR-containing complexes, which mediates phosphorylation of 'Thr-6' of histone H3 (H3T6ph), a specific tag that prevents demethylation H3K4me, prevents H3K4me demethylase activity of KDM1A. Demethylates di-methylated 'Lys-370' of p53/TP53 which prevents interaction of p53/TP53 with TP53BP1 and represses p53/TP53-mediated transcriptional activation. Demethylates and stabilizes the DNA methylase DNMT1. Demethylates methylated 'Lys-44' and methylated 'Lys-119' of SOX2. Required for gastrulation during embryogenesis. Component of a RCOR/GFI/KDM1A/HDAC complex that suppresses, via histone deacetylase (HDAC) recruitment, a number of genes implicated in multilineage blood cell development. Facilitates epithelial-to-mesenchymal transition by acting as an effector of SNAI1-mediated transcription repression of epithelial markers E-cadherin/CDH1, CDN7 and KRT8. Required for the maintenance of the silenced state of the SNAI1 target genes E-cadherin/CDH1 and CDN7. Required for the repression of GIPR expression. This Mus musculus (Mouse) protein is Lysine-specific histone demethylase 1A.